The primary structure comprises 389 residues: Probable dual-specificity RNA methyltransferase RlmN (389 aa).

The active-site Proton acceptor is Glu-114. A Radical SAM core domain is found at 120–358; the sequence is QHYGLSVCVT…CVVRQEHGTD (239 aa). Cys-127 and Cys-363 are disulfide-bonded. The [4Fe-4S] cluster site is built by Cys-134, Cys-138, and Cys-141. S-adenosyl-L-methionine-binding positions include 186 to 187, Ser-218, 241 to 243, and Asn-319; these read GE and SLH. Cys-363 functions as the S-methylcysteine intermediate in the catalytic mechanism. The tract at residues 370–389 is disordered; it reads TMKRDRQKAVAEASGKSEGK. Positions 371-389 are enriched in basic and acidic residues; the sequence is MKRDRQKAVAEASGKSEGK.

This sequence belongs to the radical SAM superfamily. RlmN family. The cofactor is [4Fe-4S] cluster.

It localises to the cytoplasm. The catalysed reaction is adenosine(2503) in 23S rRNA + 2 reduced [2Fe-2S]-[ferredoxin] + 2 S-adenosyl-L-methionine = 2-methyladenosine(2503) in 23S rRNA + 5'-deoxyadenosine + L-methionine + 2 oxidized [2Fe-2S]-[ferredoxin] + S-adenosyl-L-homocysteine. It carries out the reaction adenosine(37) in tRNA + 2 reduced [2Fe-2S]-[ferredoxin] + 2 S-adenosyl-L-methionine = 2-methyladenosine(37) in tRNA + 5'-deoxyadenosine + L-methionine + 2 oxidized [2Fe-2S]-[ferredoxin] + S-adenosyl-L-homocysteine. In terms of biological role, specifically methylates position 2 of adenine 2503 in 23S rRNA and position 2 of adenine 37 in tRNAs. The protein is Probable dual-specificity RNA methyltransferase RlmN of Streptococcus thermophilus (strain CNRZ 1066).